Here is a 30-residue protein sequence, read N- to C-terminus: V-type proton ATPase catalytic subunit A isoform 2 (30 aa).

This sequence belongs to the ATPase alpha/beta chains family. V-ATPase is a heteromultimeric enzyme composed of a peripheral catalytic V1 complex (main components: subunits A, B, C, D, E, and F) attached to an integral membrane V0 proton pore complex (main component: the proteolipid protein).

The catalysed reaction is ATP + H2O + 4 H(+)(in) = ADP + phosphate + 5 H(+)(out). In terms of biological role, catalytic subunit of the peripheral V1 complex of vacuolar ATPase. V-ATPase vacuolar ATPase is responsible for acidifying a variety of intracellular compartments in eukaryotic cells. In Equisetum arvense (Field horsetail), this protein is V-type proton ATPase catalytic subunit A isoform 2.